Reading from the N-terminus, the 150-residue chain is D-aminoacyl-tRNA deacylase (150 aa).

The Gly-cisPro motif, important for rejection of L-amino acids motif lies at 136–137; sequence GP.

Belongs to the DTD family. As to quaternary structure, homodimer.

It localises to the cytoplasm. It catalyses the reaction glycyl-tRNA(Ala) + H2O = tRNA(Ala) + glycine + H(+). The enzyme catalyses a D-aminoacyl-tRNA + H2O = a tRNA + a D-alpha-amino acid + H(+). Its function is as follows. An aminoacyl-tRNA editing enzyme that deacylates mischarged D-aminoacyl-tRNAs. Also deacylates mischarged glycyl-tRNA(Ala), protecting cells against glycine mischarging by AlaRS. Acts via tRNA-based rather than protein-based catalysis; rejects L-amino acids rather than detecting D-amino acids in the active site. By recycling D-aminoacyl-tRNA to D-amino acids and free tRNA molecules, this enzyme counteracts the toxicity associated with the formation of D-aminoacyl-tRNA entities in vivo and helps enforce protein L-homochirality. In Staphylococcus haemolyticus (strain JCSC1435), this protein is D-aminoacyl-tRNA deacylase.